Reading from the N-terminus, the 391-residue chain is GTPase Obg (391 aa).

The 159-residue stretch at 1–159 (MKFVDEAVVK…REIRLELLLL (159 aa)) folds into the Obg domain. The 174-residue stretch at 160-333 (ADVGMLGLPN…LCYKLADFME (174 aa)) folds into the OBG-type G domain. Residues 166 to 173 (GLPNAGKS), 191 to 195 (FTTLI), 213 to 216 (DIPG), 283 to 286 (NKTD), and 314 to 316 (SAI) contribute to the GTP site. Mg(2+)-binding residues include Ser173 and Thr193. The segment covering 367–383 (TEEDDDDWDDCDDEDDD) has biased composition (acidic residues). The segment at 367-391 (TEEDDDDWDDCDDEDDDGHVVYVRD) is disordered.

This sequence belongs to the TRAFAC class OBG-HflX-like GTPase superfamily. OBG GTPase family. Monomer. Mg(2+) serves as cofactor.

The protein localises to the cytoplasm. Functionally, an essential GTPase which binds GTP, GDP and possibly (p)ppGpp with moderate affinity, with high nucleotide exchange rates and a fairly low GTP hydrolysis rate. Plays a role in control of the cell cycle, stress response, ribosome biogenesis and in those bacteria that undergo differentiation, in morphogenesis control. The chain is GTPase Obg from Vibrio campbellii (strain ATCC BAA-1116).